Reading from the N-terminus, the 1072-residue chain is DNA-directed RNA polymerase subunit beta (1072 aa).

This sequence belongs to the RNA polymerase beta chain family. In terms of assembly, in plastids the minimal PEP RNA polymerase catalytic core is composed of four subunits: alpha, beta, beta', and beta''. When a (nuclear-encoded) sigma factor is associated with the core the holoenzyme is formed, which can initiate transcription.

It is found in the plastid. The protein resides in the chloroplast. It carries out the reaction RNA(n) + a ribonucleoside 5'-triphosphate = RNA(n+1) + diphosphate. In terms of biological role, DNA-dependent RNA polymerase catalyzes the transcription of DNA into RNA using the four ribonucleoside triphosphates as substrates. The protein is DNA-directed RNA polymerase subunit beta of Eucalyptus globulus subsp. globulus (Tasmanian blue gum).